The chain runs to 337 residues: Ferredoxin--NADP reductase (337 aa).

Residues D35, Q43, Y48, A88, F122, D289, and T330 each contribute to the FAD site.

Belongs to the ferredoxin--NADP reductase type 2 family. As to quaternary structure, homodimer. Requires FAD as cofactor.

The enzyme catalyses 2 reduced [2Fe-2S]-[ferredoxin] + NADP(+) + H(+) = 2 oxidized [2Fe-2S]-[ferredoxin] + NADPH. This chain is Ferredoxin--NADP reductase, found in Ehrlichia ruminantium (strain Gardel).